The chain runs to 488 residues: Eukaryotic translation initiation factor 3 subunit L (488 aa).

2 disordered regions span residues 1 to 34 (MSLP…YREQ) and 427 to 449 (SEGG…HGKE). The segment covering 7–16 (QNRDAARRAP) has biased composition (basic and acidic residues). Over residues 17-27 (DDDDDAEEETM) the composition is skewed to acidic residues. Residues 256 to 450 (DAIRMFSHIL…RSRLRHGKEI (195 aa)) enclose the PCI domain. Positions 431 to 440 (LLERRGDPQQ) are enriched in basic and acidic residues.

The protein belongs to the eIF-3 subunit L family. As to quaternary structure, component of the eukaryotic translation initiation factor 3 (eIF-3) complex.

The protein localises to the cytoplasm. In terms of biological role, component of the eukaryotic translation initiation factor 3 (eIF-3) complex, which is involved in protein synthesis of a specialized repertoire of mRNAs and, together with other initiation factors, stimulates binding of mRNA and methionyl-tRNAi to the 40S ribosome. The eIF-3 complex specifically targets and initiates translation of a subset of mRNAs involved in cell proliferation. This chain is Eukaryotic translation initiation factor 3 subunit L, found in Phaeosphaeria nodorum (strain SN15 / ATCC MYA-4574 / FGSC 10173) (Glume blotch fungus).